We begin with the raw amino-acid sequence, 917 residues long: von Willebrand factor A domain-containing protein DDB_G0285975 (917 aa).

The segment at 12-51 (DTTTTTTPTTPTTPTTPTTTPTTTTTPTTTPTTTTTSTTP) is disordered. Over residues 13–51 (TTTTTTPTTPTTPTTPTTTPTTTTTPTTTPTTTTTSTTP) the composition is skewed to low complexity. The 129-residue stretch at 87–215 (RYNTGLKNIS…NVTIHLTIIS (129 aa)) folds into the VIT domain. Residues 339–507 (EFIFLIDCSG…NFEEQVMKLV (169 aa)) enclose the VWFA domain. The 63-residue stretch at 679–741 (LFSSENRNQT…INSIPQKSNI (63 aa)) folds into the t-SNARE coiled-coil homology domain. Composition is skewed to low complexity over residues 751 to 760 (SPSEVSTSKS) and 774 to 818 (NNNN…NNNN). The disordered stretch occupies residues 751–822 (SPSEVSTSKS…NNNNNNSDNS (72 aa)).

The protein is von Willebrand factor A domain-containing protein DDB_G0285975 of Dictyostelium discoideum (Social amoeba).